The chain runs to 309 residues: Foldase protein PrsA (309 aa).

A signal peptide spans 1-22 (MKTRSKLAAGFLTLMSVATLAA). Cysteine 23 is lipidated: N-palmitoyl cysteine. Cysteine 23 carries S-diacylglycerol cysteine lipidation. Residues 146 to 241 (TPETSVQVIK…TSYYIIKVTD (96 aa)) form the PpiC domain.

Belongs to the PrsA family.

Its subcellular location is the cell membrane. The enzyme catalyses [protein]-peptidylproline (omega=180) = [protein]-peptidylproline (omega=0). Functionally, plays a major role in protein secretion by helping the post-translocational extracellular folding of several secreted proteins. This is Foldase protein PrsA from Streptococcus agalactiae serotype V (strain ATCC BAA-611 / 2603 V/R).